A 126-amino-acid polypeptide reads, in one-letter code: Small ribosomal subunit protein bS6 (126 aa).

This sequence belongs to the bacterial ribosomal protein bS6 family.

Binds together with bS18 to 16S ribosomal RNA. The chain is Small ribosomal subunit protein bS6 from Bordetella bronchiseptica (strain ATCC BAA-588 / NCTC 13252 / RB50) (Alcaligenes bronchisepticus).